Reading from the N-terminus, the 334-residue chain is Holliday junction branch migration complex subunit RuvB (334 aa).

The large ATPase domain (RuvB-L) stretch occupies residues 4-184 (ADRLIQPQIQ…FGIPLRLEFY (181 aa)). ATP-binding positions include R24, G65, K68, T69, T70, 131-133 (EDY), R174, Y184, and R221. T69 is a binding site for Mg(2+). A small ATPAse domain (RuvB-S) region spans residues 185 to 255 (NIKDLSTIVT…VAEHALDLLD (71 aa)). Positions 258-334 (SEGFDYMDRK…YQHFELIKPE (77 aa)) are head domain (RuvB-H). The DNA site is built by R294, R313, and R318.

Belongs to the RuvB family. As to quaternary structure, homohexamer. Forms an RuvA(8)-RuvB(12)-Holliday junction (HJ) complex. HJ DNA is sandwiched between 2 RuvA tetramers; dsDNA enters through RuvA and exits via RuvB. An RuvB hexamer assembles on each DNA strand where it exits the tetramer. Each RuvB hexamer is contacted by two RuvA subunits (via domain III) on 2 adjacent RuvB subunits; this complex drives branch migration. In the full resolvosome a probable DNA-RuvA(4)-RuvB(12)-RuvC(2) complex forms which resolves the HJ.

It localises to the cytoplasm. The enzyme catalyses ATP + H2O = ADP + phosphate + H(+). In terms of biological role, the RuvA-RuvB-RuvC complex processes Holliday junction (HJ) DNA during genetic recombination and DNA repair, while the RuvA-RuvB complex plays an important role in the rescue of blocked DNA replication forks via replication fork reversal (RFR). RuvA specifically binds to HJ cruciform DNA, conferring on it an open structure. The RuvB hexamer acts as an ATP-dependent pump, pulling dsDNA into and through the RuvAB complex. RuvB forms 2 homohexamers on either side of HJ DNA bound by 1 or 2 RuvA tetramers; 4 subunits per hexamer contact DNA at a time. Coordinated motions by a converter formed by DNA-disengaged RuvB subunits stimulates ATP hydrolysis and nucleotide exchange. Immobilization of the converter enables RuvB to convert the ATP-contained energy into a lever motion, pulling 2 nucleotides of DNA out of the RuvA tetramer per ATP hydrolyzed, thus driving DNA branch migration. The RuvB motors rotate together with the DNA substrate, which together with the progressing nucleotide cycle form the mechanistic basis for DNA recombination by continuous HJ branch migration. Branch migration allows RuvC to scan DNA until it finds its consensus sequence, where it cleaves and resolves cruciform DNA. In Shewanella baltica (strain OS223), this protein is Holliday junction branch migration complex subunit RuvB.